Here is a 290-residue protein sequence, read N- to C-terminus: Shikimate dehydrogenase (NADP(+)) (290 aa).

Shikimate-binding positions include 18–20 and T66; that span reads SYS. K70 acts as the Proton acceptor in catalysis. Residues N91 and D106 each coordinate shikimate. Residues 130–134 and M230 each bind NADP(+); that span reads GNGGA. Position 232 (Y232) interacts with shikimate. G253 serves as a coordination point for NADP(+).

This sequence belongs to the shikimate dehydrogenase family. As to quaternary structure, homodimer.

It catalyses the reaction shikimate + NADP(+) = 3-dehydroshikimate + NADPH + H(+). Its pathway is metabolic intermediate biosynthesis; chorismate biosynthesis; chorismate from D-erythrose 4-phosphate and phosphoenolpyruvate: step 4/7. Its function is as follows. Involved in the biosynthesis of the chorismate, which leads to the biosynthesis of aromatic amino acids. Catalyzes the reversible NADPH linked reduction of 3-dehydroshikimate (DHSA) to yield shikimate (SA). The protein is Shikimate dehydrogenase (NADP(+)) of Prosthecochloris aestuarii (strain DSM 271 / SK 413).